Reading from the N-terminus, the 166-residue chain is FMN reductase (NADH) RutF (166 aa).

It belongs to the non-flavoprotein flavin reductase family. RutF subfamily.

It carries out the reaction FMNH2 + NAD(+) = FMN + NADH + 2 H(+). Catalyzes the reduction of FMN to FMNH2 which is used to reduce pyrimidine by RutA via the Rut pathway. This chain is FMN reductase (NADH) RutF, found in Cronobacter turicensis (strain DSM 18703 / CCUG 55852 / LMG 23827 / z3032).